We begin with the raw amino-acid sequence, 111 residues long: Large ribosomal subunit protein uL23 (111 aa).

It belongs to the universal ribosomal protein uL23 family. As to quaternary structure, part of the 50S ribosomal subunit. Contacts protein L29, and trigger factor when it is bound to the ribosome.

Its function is as follows. One of the early assembly proteins it binds 23S rRNA. One of the proteins that surrounds the polypeptide exit tunnel on the outside of the ribosome. Forms the main docking site for trigger factor binding to the ribosome. The sequence is that of Large ribosomal subunit protein uL23 from Chlamydia felis (strain Fe/C-56) (Chlamydophila felis).